We begin with the raw amino-acid sequence, 119 residues long: Nucleoid-associated protein Cphy_0047 (119 aa).

The interval alanine 23–threonine 45 is disordered. The segment covering lysine 28 to tryptophan 42 has biased composition (basic and acidic residues).

It belongs to the YbaB/EbfC family. In terms of assembly, homodimer.

It is found in the cytoplasm. The protein resides in the nucleoid. Binds to DNA and alters its conformation. May be involved in regulation of gene expression, nucleoid organization and DNA protection. The chain is Nucleoid-associated protein Cphy_0047 from Lachnoclostridium phytofermentans (strain ATCC 700394 / DSM 18823 / ISDg) (Clostridium phytofermentans).